A 156-amino-acid polypeptide reads, in one-letter code: Small ribosomal subunit protein uS7 (156 aa).

This sequence belongs to the universal ribosomal protein uS7 family. As to quaternary structure, part of the 30S ribosomal subunit. Contacts proteins S9 and S11.

Its function is as follows. One of the primary rRNA binding proteins, it binds directly to 16S rRNA where it nucleates assembly of the head domain of the 30S subunit. Is located at the subunit interface close to the decoding center, probably blocks exit of the E-site tRNA. This Synechococcus sp. (strain RCC307) protein is Small ribosomal subunit protein uS7.